Consider the following 337-residue polypeptide: 2-oxoglutarate-dependent ethylene/succinate-forming enzyme (337 aa).

The Fe2OG dioxygenase domain occupies 166-286 (GWHHMRVLRF…RFACAYFHEP (121 aa)). Fe cation-binding residues include H189 and H268.

It belongs to the iron/ascorbate-dependent oxidoreductase family. Monomer. It depends on Fe(2+) as a cofactor.

The catalysed reaction is 2-oxoglutarate + O2 + 2 H(+) = ethene + 3 CO2 + H2O. It carries out the reaction L-arginine + 2-oxoglutarate + O2 = guanidine + L-glutamate 5-semialdehyde + succinate + CO2. Its pathway is alkene biosynthesis; ethylene biosynthesis via 2-oxoglutarate. In terms of biological role, simultaneously catalyzes two reactions, namely formation of ethylene and of succinate from 2-oxoglutarate. The protein is 2-oxoglutarate-dependent ethylene/succinate-forming enzyme (efe) of Pseudomonas syringae pv. pisi.